Here is a 64-residue protein sequence, read N- to C-terminus: UPF0434 protein TERTU_2813 (64 aa).

It belongs to the UPF0434 family.

The chain is UPF0434 protein TERTU_2813 from Teredinibacter turnerae (strain ATCC 39867 / T7901).